The sequence spans 294 residues: Cytidine deaminase (294 aa).

2 consecutive CMP/dCMP-type deaminase domains span residues 48–168 (DDDA…FGPT) and 187–294 (AETD…RVTF). 89–91 (NME) is a substrate binding site. Histidine 102 serves as a coordination point for Zn(2+). Glutamate 104 acts as the Proton donor in catalysis. 2 residues coordinate Zn(2+): cysteine 129 and cysteine 132.

Belongs to the cytidine and deoxycytidylate deaminase family. Homodimer. The cofactor is Zn(2+).

It carries out the reaction cytidine + H2O + H(+) = uridine + NH4(+). It catalyses the reaction 2'-deoxycytidine + H2O + H(+) = 2'-deoxyuridine + NH4(+). This enzyme scavenges exogenous and endogenous cytidine and 2'-deoxycytidine for UMP synthesis. The polypeptide is Cytidine deaminase (Yersinia pseudotuberculosis serotype IB (strain PB1/+)).